The following is a 104-amino-acid chain: Phosphoribosyl-ATP pyrophosphatase (104 aa).

This sequence belongs to the PRA-PH family.

It is found in the cytoplasm. It carries out the reaction 1-(5-phospho-beta-D-ribosyl)-ATP + H2O = 1-(5-phospho-beta-D-ribosyl)-5'-AMP + diphosphate + H(+). It functions in the pathway amino-acid biosynthesis; L-histidine biosynthesis; L-histidine from 5-phospho-alpha-D-ribose 1-diphosphate: step 2/9. This chain is Phosphoribosyl-ATP pyrophosphatase, found in Methanoregula boonei (strain DSM 21154 / JCM 14090 / 6A8).